The chain runs to 308 residues: Tyrosine recombinase XerC (308 aa).

The 82-residue stretch at S20–Q101 folds into the Core-binding (CB) domain. In terms of domain architecture, Tyr recombinase spans D122–N302. Catalysis depends on residues R163, K187, H254, R257, and H280. Residue Y289 is the O-(3'-phospho-DNA)-tyrosine intermediate of the active site.

It belongs to the 'phage' integrase family. XerC subfamily. Forms a cyclic heterotetrameric complex composed of two molecules of XerC and two molecules of XerD.

Its subcellular location is the cytoplasm. Functionally, site-specific tyrosine recombinase, which acts by catalyzing the cutting and rejoining of the recombining DNA molecules. The XerC-XerD complex is essential to convert dimers of the bacterial chromosome into monomers to permit their segregation at cell division. It also contributes to the segregational stability of plasmids. In Corynebacterium glutamicum (strain ATCC 13032 / DSM 20300 / JCM 1318 / BCRC 11384 / CCUG 27702 / LMG 3730 / NBRC 12168 / NCIMB 10025 / NRRL B-2784 / 534), this protein is Tyrosine recombinase XerC.